Here is an 835-residue protein sequence, read N- to C-terminus: Cap-specific mRNA (nucleoside-2'-O-)-methyltransferase 1 (835 aa).

The tract at residues 1 to 67 is disordered; it reads MKRRTDPECT…EGKQHSSDSF (67 aa). The Bipartite nuclear localization signal motif lies at 2-19; sequence KRRTDPECTAPIKKQKKR. Serine 28, serine 31, serine 53, serine 66, and serine 91 each carry phosphoserine. Over residues 37 to 54 the composition is skewed to polar residues; sequence SSVSHGAKASTTSLSGSD. Basic and acidic residues predominate over residues 57 to 67; it reads TEGKQHSSDSF. In terms of domain architecture, G-patch spans 87-133; it reads YNSVSQKLMAKMGFREGEGLGKYSQGRKDIVEASSQKGRRGLGLTLR. Position 108 is an N6-acetyllysine (lysine 108). Substrate-binding positions include 203 to 207 and arginine 218; that span reads KSVFD. The region spanning 231-450 is the RrmJ-type SAM-dependent 2'-O-MTase domain; that stretch reads FFLNRAAMKM…ERYVVCKGLK (220 aa). Asparagine 234 is an S-adenosyl-L-methionine binding site. The active site involves lysine 239. Residues 277–283 and 335–336 contribute to the S-adenosyl-L-methionine site; these read CAGPGGF and DI. Residue aspartate 364 is part of the active site. A substrate-binding site is contributed by 374–376; the sequence is NLQ. Residue lysine 404 is the Proton acceptor of the active site. Asparagine 439 provides a ligand contact to substrate. An interaction with POLR2A region spans residues 727 to 835; the sequence is SSGTPKLSYT…VLSFIQMHRA (109 aa). The region spanning 752–786 is the WW domain; that stretch reads RTVNEPWTMGFSKSFKKKFFYNKKTKDSTFDLPAD.

Interacts with POLR2A (via C-terminus).

Its subcellular location is the nucleus. It carries out the reaction a 5'-end (N(7)-methyl 5'-triphosphoguanosine)-ribonucleoside in mRNA + S-adenosyl-L-methionine = a 5'-end (N(7)-methyl 5'-triphosphoguanosine)-(2'-O-methyl-ribonucleoside) in mRNA + S-adenosyl-L-homocysteine + H(+). Functionally, S-adenosyl-L-methionine-dependent methyltransferase that mediates mRNA cap1 2'-O-ribose methylation to the 5'-cap structure of mRNAs. Methylates the ribose of the first nucleotide of a m(7)GpppG-capped mRNA and small nuclear RNA (snRNA) to produce m(7)GpppRm (cap1). Displays a preference for cap0 transcripts. Cap1 modification is linked to higher levels of translation. May be involved in the interferon response pathway. The chain is Cap-specific mRNA (nucleoside-2'-O-)-methyltransferase 1 (CMTR1) from Homo sapiens (Human).